A 142-amino-acid chain; its full sequence is Hemoglobin subunit theta-1 (142 aa).

A Globin domain is found at 2-142 (ALSAEDRALV…VISALASEYR (141 aa)). Residues H59 and H88 each coordinate heme b.

The protein belongs to the globin family.

In Pongo pygmaeus (Bornean orangutan), this protein is Hemoglobin subunit theta-1 (HBQ1).